The sequence spans 249 residues: ATP synthase subunit a (249 aa).

A run of 5 helical transmembrane segments spans residues 33 to 53 (GQVF…SLLA), 92 to 112 (VPFI…GALI), 131 to 151 (INTT…AGFS), 196 to 216 (LVVA…AMIL), and 217 to 237 (GLFT…SYIG).

It belongs to the ATPase A chain family. As to quaternary structure, F-type ATPases have 2 components, CF(1) - the catalytic core - and CF(0) - the membrane proton channel. CF(1) has five subunits: alpha(3), beta(3), gamma(1), delta(1), epsilon(1). CF(0) has four main subunits: a, b, b' and c.

Its subcellular location is the cellular thylakoid membrane. Its function is as follows. Key component of the proton channel; it plays a direct role in the translocation of protons across the membrane. The protein is ATP synthase subunit a of Synechococcus elongatus (strain ATCC 33912 / PCC 7942 / FACHB-805) (Anacystis nidulans R2).